A 59-amino-acid polypeptide reads, in one-letter code: UPF0291 protein CPR_1073 (59 aa).

A disordered region spans residues 1 to 30 (MNIDELTKRINELHKKHKEEGLSEDEHKER).

It belongs to the UPF0291 family.

It localises to the cytoplasm. The protein is UPF0291 protein CPR_1073 of Clostridium perfringens (strain SM101 / Type A).